A 272-amino-acid chain; its full sequence is N-acetylmuramoyl-L-alanine amidase CwlA (272 aa).

Positions 24–142 constitute an N-acetylmuramoyl-L-alanine amidase domain; it reads KAEYITIHNT…QDWNGKYCPH (119 aa).

Belongs to the N-acetylmuramoyl-L-alanine amidase 2 family.

It carries out the reaction Hydrolyzes the link between N-acetylmuramoyl residues and L-amino acid residues in certain cell-wall glycopeptides.. Functionally, autolysins are involved in some important biological processes such as cell separation, cell-wall turnover, competence for genetic transformation, formation of the flagella and sporulation. The protein is N-acetylmuramoyl-L-alanine amidase CwlA (cwlA) of Bacillus subtilis (strain 168).